Reading from the N-terminus, the 194-residue chain is Small ribosomal subunit protein uS4c (194 aa).

Positions 82–143 (MRLDNILFRL…KERSKVLIQN (62 aa)) constitute an S4 RNA-binding domain.

This sequence belongs to the universal ribosomal protein uS4 family. Part of the 30S ribosomal subunit. Contacts protein S5. The interaction surface between S4 and S5 is involved in control of translational fidelity.

It is found in the plastid. The protein resides in the chloroplast. One of the primary rRNA binding proteins, it binds directly to 16S rRNA where it nucleates assembly of the body of the 30S subunit. Functionally, with S5 and S12 plays an important role in translational accuracy. This chain is Small ribosomal subunit protein uS4c (rps4), found in Trimezia steyermarkii (Steyermark's trimezia).